We begin with the raw amino-acid sequence, 237 residues long: BTB/POZ domain-containing protein KCTD6 (237 aa).

Residues 1–104 form an interaction with ANK1 isoform Mu17 region; sequence MDNGDWGYMM…FYQIEPLIQC (104 aa). Residues 10-110 form an interaction with CUL3 region; that stretch reads MTDPVTLNVG…LIQCLNDPKP (101 aa). One can recognise a BTB domain in the interval 12 to 81; sequence DPVTLNVGGH…LRTSELTLPL (70 aa). Residues 113–187 form an interaction with USP21 region; sequence PMDTFEEVVE…TFGPCDYHQE (75 aa).

In terms of assembly, homopentamer. Interacts with KCTD11; KCTD6 and KCTD11 may associate in pentameric assemblies. Interacts (via BTB domain) with CUL3; initially a 4:4 stoichiometry has been reported, however, electron microscopy revealed pentameric states with a five-pointed pinwheel shape. The interaction with CUL3 is indicative for a participation in a BCR (BTB-CUL3-RBX1) E3 ubiquitin-protein ligase complex. Interacts with HDAC1; probably indirect as the interaction is requires the presence of KCTD11. Interacts with USP21 (preferentially catalytic inactive form). Interacts with ANK1 isoform Mu17; detected in striated muscle. Interacts with USP11. Highly expressed in cerebellum and brain. Expression is down-regulated in medulloblastoma.

It is found in the cytoplasm. The protein localises to the myofibril. Its subcellular location is the sarcomere. It localises to the m line. It functions in the pathway protein modification; protein ubiquitination. Functionally, probable substrate-specific adapter of a BCR (BTB-CUL3-RBX1) E3 ubiquitin-protein ligase complex mediating the ubiquitination and subsequent proteasomal degradation of target proteins. Promotes the ubiquitination of HDAC1; the function seems to depend on KCTD11:KCTD6 oligomerization. Can function as antagonist of the Hedgehog pathway by affecting the nuclear transfer of transcription factor GLI1; the function probably occurs via HDAC1 down-regulation, keeping GLI1 acetylated and inactive. Inhibits cell growth and tumorigenicity of medulloblastoma (MDB). Involved in regulating protein levels of ANK1 isoform Mu17 probably implicating CUL3-dependent proteasomal degradation. The sequence is that of BTB/POZ domain-containing protein KCTD6 (KCTD6) from Homo sapiens (Human).